A 730-amino-acid polypeptide reads, in one-letter code: Wall-associated receptor kinase-like 3 (730 aa).

The first 25 residues, 1–25, serve as a signal peptide directing secretion; sequence MKTKTYNFRYIVASVLTLLMNGSSA. At 26 to 357 the chain is on the extracellular side; it reads ATPPNSNSSS…AKLAHVLRGV (332 aa). N-linked (GlcNAc...) asparagine glycosylation is found at Asn-32, Asn-38, Asn-68, Asn-90, Asn-119, Asn-132, Asn-212, Asn-233, and Asn-269. The atypical EGF-like stretch occupies residues 283-340; the sequence is CLCRYGYFSRMSYRSCYCGSGYRGNPYIRGGCIDIDECEVPNKCGEDTCVNMAGRYSC. Intrachain disulfides connect Cys-285–Cys-298, Cys-320–Cys-331, and Cys-326–Cys-340. Residues 358–378 form a helical membrane-spanning segment; sequence LIGLLGLLFFVIGIFGLYKFI. Residues 379-730 lie on the Cytoplasmic side of the membrane; sequence RKRRRIIRSM…LMEINRIYDS (352 aa). Positions 428-699 constitute a Protein kinase domain; the sequence is FSIDRVLGQG…REVSIKLERI (272 aa). Residues 434–442 and Lys-456 contribute to the ATP site; that span reads LGQGGQGTV. Asp-553 acts as the Proton acceptor in catalysis. Residues 703 to 730 are disordered; that stretch reads PKDLDVHTENEEEEEEDQLMEINRIYDS. Positions 712–721 are enriched in acidic residues; it reads NEEEEEEDQL.

It belongs to the protein kinase superfamily. Ser/Thr protein kinase family. In terms of tissue distribution, preferentially expressed in roots and flowers.

It localises to the membrane. It carries out the reaction L-seryl-[protein] + ATP = O-phospho-L-seryl-[protein] + ADP + H(+). The enzyme catalyses L-threonyl-[protein] + ATP = O-phospho-L-threonyl-[protein] + ADP + H(+). Its function is as follows. Serine/threonine-protein kinase that may function as a signaling receptor of extracellular matrix component. The polypeptide is Wall-associated receptor kinase-like 3 (WAKL3) (Arabidopsis thaliana (Mouse-ear cress)).